Here is a 444-residue protein sequence, read N- to C-terminus: N-succinylarginine dihydrolase (444 aa).

Substrate-binding positions include 19-28 (SGLSVGNIAS), N110, and 137-138 (HR). Residue E174 is part of the active site. A substrate-binding site is contributed by R214. H250 is a catalytic residue. Residues D252 and N362 each contribute to the substrate site. Catalysis depends on C368, which acts as the Nucleophile.

This sequence belongs to the succinylarginine dihydrolase family. As to quaternary structure, homodimer.

The catalysed reaction is N(2)-succinyl-L-arginine + 2 H2O + 2 H(+) = N(2)-succinyl-L-ornithine + 2 NH4(+) + CO2. Its pathway is amino-acid degradation; L-arginine degradation via AST pathway; L-glutamate and succinate from L-arginine: step 2/5. Its function is as follows. Catalyzes the hydrolysis of N(2)-succinylarginine into N(2)-succinylornithine, ammonia and CO(2). This chain is N-succinylarginine dihydrolase, found in Aliivibrio fischeri (strain ATCC 700601 / ES114) (Vibrio fischeri).